A 481-amino-acid chain; its full sequence is Glutamate--cysteine ligase (481 aa).

It belongs to the glutamate--cysteine ligase type 1 family. Type 1 subfamily.

The catalysed reaction is L-cysteine + L-glutamate + ATP = gamma-L-glutamyl-L-cysteine + ADP + phosphate + H(+). Its pathway is sulfur metabolism; glutathione biosynthesis; glutathione from L-cysteine and L-glutamate: step 1/2. In Clostridium acetobutylicum (strain ATCC 824 / DSM 792 / JCM 1419 / IAM 19013 / LMG 5710 / NBRC 13948 / NRRL B-527 / VKM B-1787 / 2291 / W), this protein is Glutamate--cysteine ligase.